A 445-amino-acid polypeptide reads, in one-letter code: Sterile alpha motif domain-containing protein 7 (445 aa).

The tract at residues 98–172 (HAARAEMEMY…HLQGNPILLA (75 aa)) is required for localization to nuclear polycomb bodies. The disordered stretch occupies residues 193–282 (YQKPPESDTE…WDDGKGKPSE (90 aa)). The span at 227-244 (IKDPDIEVDNQQKPRVAD) shows a compositional bias: basic and acidic residues. Positions 324–378 (WTVDDVYNFIRSLPGCSDYAQVFKDHAIDGETLPLLTEQHLRGTMGLKLGPALKI) constitute an SAM domain. Residues 425 to 445 (SIPGPQDLLSPKRTEQDVMRN) form a disordered region. A compositionally biased stretch (basic and acidic residues) spans 434–445 (SPKRTEQDVMRN).

In terms of assembly, monomer, homodimer and homooligomer. Component of a Polycomb group (PcG) multiprotein PRC1-like complex. Interacts with PHC2 and NR2E3. Interacts with RNF1 in a PHC2-dependent manner. Interacts with SAMD11. In terms of tissue distribution, expressed in the retina and the pineal gland. In the retina, it is predominantly expressed in the outer nuclear layer and developing rod photoreceptors.

The protein resides in the nucleus. The protein localises to the cytoplasm. Functionally, component of a Polycomb group (PcG) multiprotein PRC1-like complex, essential for establishing rod photoreceptor cell identity and function by silencing nonrod gene expression in developing rod photoreceptor cells. Via its association with the PRC1-like complex, promotes epigenetic repressive marks H3K27me3 and H2AK119ub marks in nonrod genes, silencing their transcription. Represses Crx-controlled photoreceptor-specific gene expression. This Mus musculus (Mouse) protein is Sterile alpha motif domain-containing protein 7 (Samd7).